A 157-amino-acid chain; its full sequence is Probable succinate transporter subunit YjjB (157 aa).

A run of 4 helical transmembrane segments spans residues 2 to 22, 55 to 75, 87 to 107, and 129 to 149; these read GIIS…IPAV, AGFN…SIGI, IFTV…TAMI, and FLKA…PGLW.

Belongs to the ThrE exporter (TC 2.A.79) family. The transporter is composed of YjjB and YjjP.

Its subcellular location is the cell inner membrane. Involved in succinate export with YjjP. Both proteins are required for export. In Klebsiella pneumoniae (strain 342), this protein is Probable succinate transporter subunit YjjB.